The sequence spans 344 residues: Gibberellin receptor GID1C (344 aa).

Position 2 is an N-acetylalanine (Ala2). Residues 111–113 carry the Involved in the stabilization of the negatively charged intermediate by the formation of the oxyanion hole motif; that stretch reads HGG. Residues 113–114, Tyr125, and Ser189 contribute to the gibberellin A4 site; that span reads GS. 4 residues coordinate gibberellin A3: Ser114, Tyr125, Ser189, and Phe236. Ser189 is a catalytic residue. Asp287 is a catalytic residue. Gly318 lines the gibberellin A4 pocket. Gly318 provides a ligand contact to gibberellin A3.

This sequence belongs to the 'GDXG' lipolytic enzyme family. As to quaternary structure, interacts with the DELLA proteins GAI, RGA, RGL1, RGL2 and RGL3 in a GA-dependent manner. As to expression, widely expressed.

The protein resides in the nucleus. Functionally, functions as a soluble gibberellin (GA) receptor. GA is an essential hormone that regulates growth and development in plants. Binds with high affinity the biologically active gibberellin GA4, but has no affinity for the biologically inactive GAs. In response to GA, interacts with specific DELLA proteins, known as repressors of GA-induced growth, and targets them for degradation via proteasome. Seems to be required for GA signaling that controls root growth, seed germination and stem elongation. Partially redundant with GID1A and GID1B. The polypeptide is Gibberellin receptor GID1C (GID1C) (Arabidopsis thaliana (Mouse-ear cress)).